The sequence spans 837 residues: Protein translocase subunit SecA (837 aa).

ATP-binding positions include Q85, 103-107 (GEGKT), and D493. Positions 821, 823, 832, and 833 each coordinate Zn(2+).

It belongs to the SecA family. Monomer and homodimer. Part of the essential Sec protein translocation apparatus which comprises SecA, SecYEG and auxiliary proteins SecDF. Other proteins may also be involved. The cofactor is Zn(2+).

The protein resides in the cell membrane. The protein localises to the cytoplasm. The enzyme catalyses ATP + H2O + cellular proteinSide 1 = ADP + phosphate + cellular proteinSide 2.. In terms of biological role, part of the Sec protein translocase complex. Interacts with the SecYEG preprotein conducting channel. Has a central role in coupling the hydrolysis of ATP to the transfer of proteins into and across the cell membrane, serving as an ATP-driven molecular motor driving the stepwise translocation of polypeptide chains across the membrane. The protein is Protein translocase subunit SecA of Streptococcus pneumoniae serotype 19F (strain G54).